A 162-amino-acid chain; its full sequence is Protein NrdI (162 aa).

The protein belongs to the NrdI family.

Its function is as follows. Probably involved in ribonucleotide reductase function. This chain is Protein NrdI, found in Streptococcus pyogenes serotype M1.